The following is a 381-amino-acid chain: Cytochrome b (381 aa).

The next 4 helical transmembrane spans lie at 34-54 (FGSL…FLAM), 78-99 (WLIR…YLHI), 114-134 (WNIG…GYVL), and 179-199 (FFAF…IHLL). Residues histidine 84 and histidine 98 each contribute to the heme b site. Positions 183 and 197 each coordinate heme b. Histidine 202 contributes to the a ubiquinone binding site. A run of 4 helical transmembrane segments spans residues 227–247 (YKDL…ALFM), 289–309 (LGGV…PLLH), 321–341 (MTQI…WIGG), and 348–368 (FMMV…IIMP).

Belongs to the cytochrome b family. As to quaternary structure, the cytochrome bc1 complex contains 3 respiratory subunits (MT-CYB, CYC1 and UQCRFS1), 2 core proteins (UQCRC1 and UQCRC2) and probably 6 low-molecular weight proteins. Heme b is required as a cofactor.

It is found in the mitochondrion inner membrane. Functionally, component of the ubiquinol-cytochrome c reductase complex (complex III or cytochrome b-c1 complex) that is part of the mitochondrial respiratory chain. The b-c1 complex mediates electron transfer from ubiquinol to cytochrome c. Contributes to the generation of a proton gradient across the mitochondrial membrane that is then used for ATP synthesis. The sequence is that of Cytochrome b (mt-cyb) from Prionace glauca (Blue shark).